Consider the following 354-residue polypeptide: S-adenosylmethionine:tRNA ribosyltransferase-isomerase (354 aa).

The protein belongs to the QueA family. As to quaternary structure, monomer.

The protein localises to the cytoplasm. It carries out the reaction 7-aminomethyl-7-carbaguanosine(34) in tRNA + S-adenosyl-L-methionine = epoxyqueuosine(34) in tRNA + adenine + L-methionine + 2 H(+). The protein operates within tRNA modification; tRNA-queuosine biosynthesis. In terms of biological role, transfers and isomerizes the ribose moiety from AdoMet to the 7-aminomethyl group of 7-deazaguanine (preQ1-tRNA) to give epoxyqueuosine (oQ-tRNA). This chain is S-adenosylmethionine:tRNA ribosyltransferase-isomerase, found in Salmonella paratyphi A (strain ATCC 9150 / SARB42).